The primary structure comprises 447 residues: Ribosomal protein uS12 methylthiotransferase RimO (447 aa).

One can recognise an MTTase N-terminal domain in the interval 4 to 114; that stretch reads PKVGFVSLGC…VMEAVHEYVP (111 aa). The [4Fe-4S] cluster site is built by Cys-13, Cys-49, Cys-78, Cys-147, Cys-151, and Cys-154. In terms of domain architecture, Radical SAM core spans 133–370; sequence LTPKHYAYLK…MQVQQQISAA (238 aa). One can recognise a TRAM domain in the interval 373–443; the sequence is QKRIGQTMTV…EYDLFAKLIK (71 aa).

It belongs to the methylthiotransferase family. RimO subfamily. Requires [4Fe-4S] cluster as cofactor.

The protein localises to the cytoplasm. It catalyses the reaction L-aspartate(89)-[ribosomal protein uS12]-hydrogen + (sulfur carrier)-SH + AH2 + 2 S-adenosyl-L-methionine = 3-methylsulfanyl-L-aspartate(89)-[ribosomal protein uS12]-hydrogen + (sulfur carrier)-H + 5'-deoxyadenosine + L-methionine + A + S-adenosyl-L-homocysteine + 2 H(+). In terms of biological role, catalyzes the methylthiolation of an aspartic acid residue of ribosomal protein uS12. The sequence is that of Ribosomal protein uS12 methylthiotransferase RimO from Acinetobacter baumannii (strain SDF).